Here is a 393-residue protein sequence, read N- to C-terminus: Probable hydrolase sll0100 (393 aa).

It belongs to the peptidase M20 family.

The polypeptide is Probable hydrolase sll0100 (Synechocystis sp. (strain ATCC 27184 / PCC 6803 / Kazusa)).